We begin with the raw amino-acid sequence, 196 residues long: MPFVVMITGIPGVGKSTITRLALRKARAKFRLVNFGDLMFEEAVRAGLVEHRDEMRKLNPNVQKELQMKAARRIVEMAKTEPILIDTHATIRTPVGYLLGFPKEVIEVINPNFIVIIEATPSEILGRRLRDLKRDRDVETEEQIQRHQDLNRAAAVSYAMHSNALIKIIENHEDKGLEEAVHELVEVLDLAVGEYD.

9 to 17 (GIPGVGKST) provides a ligand contact to ATP.

This sequence belongs to the archaeal adenylate kinase family.

The protein resides in the cytoplasm. The catalysed reaction is AMP + ATP = 2 ADP. This chain is Adenylate kinase, found in Thermococcus onnurineus (strain NA1).